Reading from the N-terminus, the 63-residue chain is UPF0434 protein Mmar10_2939 (63 aa).

Belongs to the UPF0434 family.

The protein is UPF0434 protein Mmar10_2939 of Maricaulis maris (strain MCS10) (Caulobacter maris).